The following is a 185-amino-acid chain: Small ribosomal subunit protein uS5c (185 aa).

The S5 DRBM domain maps to 26 to 89; that stretch reads FVERLIKISR…ADGRKNLIKI (64 aa).

This sequence belongs to the universal ribosomal protein uS5 family. As to quaternary structure, part of the 30S ribosomal subunit. Contacts protein S4.

It is found in the plastid. The protein resides in the chloroplast. Functionally, with S4 and S12 plays an important role in translational accuracy. This Trieres chinensis (Marine centric diatom) protein is Small ribosomal subunit protein uS5c (rps5).